Here is a 306-residue protein sequence, read N- to C-terminus: Acetylglutamate kinase (306 aa).

Substrate-binding positions include Gly68–Gly69, Arg90, and Asn195.

The protein belongs to the acetylglutamate kinase family. ArgB subfamily.

It localises to the cytoplasm. The catalysed reaction is N-acetyl-L-glutamate + ATP = N-acetyl-L-glutamyl 5-phosphate + ADP. Its pathway is amino-acid biosynthesis; L-arginine biosynthesis; N(2)-acetyl-L-ornithine from L-glutamate: step 2/4. Catalyzes the ATP-dependent phosphorylation of N-acetyl-L-glutamate. This is Acetylglutamate kinase from Chromohalobacter salexigens (strain ATCC BAA-138 / DSM 3043 / CIP 106854 / NCIMB 13768 / 1H11).